Reading from the N-terminus, the 277-residue chain is MLSIKEATKNISQQLTTVSKTPRLDAELLLECVLKKSRADLFAYPEIQLNSSQQKTLSAYVKRRLKGEPIAYILGQKEFWSLNLKVTPDVLIPRPETEMLVEWILKNLPKDEKLRIADLGTGSGAVALAIAVERPHWTIDATDNSQAALKIAEINAKQHEIKNCNFYHGEWCQALPRRDYHAIVGNPPYIPDKDQHLQQLKHEPREALAAGSDGLSAIKIIIHEAKSYLVNGGWLLLEHGYDQAEKIMTLMQADGYREITDRRDLAGLSRMMVARRG.

Residues glycine 120–glycine 124, aspartate 143, tryptophan 171, and asparagine 186 contribute to the S-adenosyl-L-methionine site. Asparagine 186 to tyrosine 189 provides a ligand contact to substrate.

It belongs to the protein N5-glutamine methyltransferase family. PrmC subfamily.

It carries out the reaction L-glutaminyl-[peptide chain release factor] + S-adenosyl-L-methionine = N(5)-methyl-L-glutaminyl-[peptide chain release factor] + S-adenosyl-L-homocysteine + H(+). Its function is as follows. Methylates the class 1 translation termination release factors RF1/PrfA and RF2/PrfB on the glutamine residue of the universally conserved GGQ motif. This Coxiella burnetii (strain RSA 493 / Nine Mile phase I) protein is Release factor glutamine methyltransferase.